The primary structure comprises 650 residues: Protein KINESIN LIGHT CHAIN-RELATED 3 (650 aa).

Positions 104–141 are disordered; sequence EKQTGKKNVTKSNVGVGGMRKKKVGGTKLQNGNEEPSS. Positions 131 to 141 are enriched in polar residues; it reads KLQNGNEEPSS. TPR repeat units follow at residues 192–225, 235–268, 277–310, 319–353, 359–392, 401–434, 444–477, 485–518, 527–560, and 569–602; these read IMCL…PVVE, FAGL…QKKV, GETC…HRES, AADR…AANG, AFVD…LKTA, GSVY…YESH, ASGL…YADS, AGIE…LRAT, GIAL…LEQE, and LGLY…REEK.

The protein belongs to the kinesin light chain family.

The protein is Protein KINESIN LIGHT CHAIN-RELATED 3 of Arabidopsis thaliana (Mouse-ear cress).